We begin with the raw amino-acid sequence, 380 residues long: Cytochrome b (380 aa).

A run of 4 helical transmembrane segments spans residues 34-54, 78-99, 114-134, and 179-199; these read FGSL…LLAM, WLIR…YLHI, WNTG…GYVL, and FFAL…IHLT. Residues His-84 and His-98 each coordinate heme b. His-183 and His-197 together coordinate heme b. His-202 contacts a ubiquinone. 4 consecutive transmembrane segments (helical) span residues 227–247, 289–309, 321–341, and 348–368; these read LKDF…ALFT, LGGV…PFLH, LSQT…WIGS, and FITI…ILFP.

Belongs to the cytochrome b family. The cytochrome bc1 complex contains 11 subunits: 3 respiratory subunits (MT-CYB, CYC1 and UQCRFS1), 2 core proteins (UQCRC1 and UQCRC2) and 6 low-molecular weight proteins (UQCRH/QCR6, UQCRB/QCR7, UQCRQ/QCR8, UQCR10/QCR9, UQCR11/QCR10 and a cleavage product of UQCRFS1). This cytochrome bc1 complex then forms a dimer. It depends on heme b as a cofactor.

The protein resides in the mitochondrion inner membrane. Component of the ubiquinol-cytochrome c reductase complex (complex III or cytochrome b-c1 complex) that is part of the mitochondrial respiratory chain. The b-c1 complex mediates electron transfer from ubiquinol to cytochrome c. Contributes to the generation of a proton gradient across the mitochondrial membrane that is then used for ATP synthesis. The protein is Cytochrome b (MT-CYB) of Coracias caudatus (Lilac-breasted roller).